A 419-amino-acid polypeptide reads, in one-letter code: Divergent protein kinase domain 1C (419 aa).

Over methionine 1–arginine 22 the chain is Cytoplasmic. Residues arginine 16–arginine 17 carry the May mediate ER retention motif. Residues glycine 23–leucine 43 traverse the membrane as a helical segment. At arginine 44–lysine 419 the chain is on the lumenal side.

It belongs to the DIPK family. Post-translationally, among the many cysteines in the lumenal domain, most are probably involved in disulfide bonds.

It localises to the endoplasmic reticulum membrane. In Homo sapiens (Human), this protein is Divergent protein kinase domain 1C.